We begin with the raw amino-acid sequence, 157 residues long: 6,7-dimethyl-8-ribityllumazine synthase (157 aa).

5-amino-6-(D-ribitylamino)uracil contacts are provided by residues Phe22, 56–58, and 80–82; these read AME and AVV. 85 to 86 lines the (2S)-2-hydroxy-3-oxobutyl phosphate pocket; the sequence is ET. Catalysis depends on His88, which acts as the Proton donor. Phe113 contributes to the 5-amino-6-(D-ribitylamino)uracil binding site. Arg127 serves as a coordination point for (2S)-2-hydroxy-3-oxobutyl phosphate.

It belongs to the DMRL synthase family.

It catalyses the reaction (2S)-2-hydroxy-3-oxobutyl phosphate + 5-amino-6-(D-ribitylamino)uracil = 6,7-dimethyl-8-(1-D-ribityl)lumazine + phosphate + 2 H2O + H(+). It participates in cofactor biosynthesis; riboflavin biosynthesis; riboflavin from 2-hydroxy-3-oxobutyl phosphate and 5-amino-6-(D-ribitylamino)uracil: step 1/2. Its function is as follows. Catalyzes the formation of 6,7-dimethyl-8-ribityllumazine by condensation of 5-amino-6-(D-ribitylamino)uracil with 3,4-dihydroxy-2-butanone 4-phosphate. This is the penultimate step in the biosynthesis of riboflavin. The protein is 6,7-dimethyl-8-ribityllumazine synthase of Levilactobacillus brevis (strain ATCC 367 / BCRC 12310 / CIP 105137 / JCM 1170 / LMG 11437 / NCIMB 947 / NCTC 947) (Lactobacillus brevis).